A 350-amino-acid polypeptide reads, in one-letter code: Bifunctional methylenetetrahydrofolate dehydrogenase/cyclohydrolase, mitochondrial (350 aa).

The N-terminal 35 residues, 1 to 35, are a transit peptide targeting the mitochondrion; it reads MAATSLMSALAARLLQPAHSCSLRLRPFHLAAVRN. Lysine 50 carries the post-translational modification N6-acetyllysine; alternate. Lysine 50 participates in a covalent cross-link: Glycyl lysine isopeptide (Lys-Gly) (interchain with G-Cter in SUMO2); alternate. Residues 84-88 and 131-133 each bind substrate; these read YVLNK and VQL. Residues 200–202 and arginine 233 each bind NAD(+); that span reads GRS. Residue 309 to 313 coordinates substrate; that stretch reads PGGVG.

The protein belongs to the tetrahydrofolate dehydrogenase/cyclohydrolase family. Homodimer. Mg(2+) is required as a cofactor.

It localises to the mitochondrion. It carries out the reaction (6R)-5,10-methylene-5,6,7,8-tetrahydrofolate + NAD(+) = (6R)-5,10-methenyltetrahydrofolate + NADH. The enzyme catalyses (6R)-5,10-methenyltetrahydrofolate + H2O = (6R)-10-formyltetrahydrofolate + H(+). Its function is as follows. Although its dehydrogenase activity is NAD-specific, it can also utilize NADP at a reduced efficiency. This is Bifunctional methylenetetrahydrofolate dehydrogenase/cyclohydrolase, mitochondrial (MTHFD2) from Homo sapiens (Human).